The primary structure comprises 143 residues: Large ribosomal subunit protein uL16 (143 aa).

Residues 1–26 form a disordered region; that stretch reads MSMALLPRRVKYRKSQRGSRKGNATR. Over residues 8-20 the composition is skewed to basic residues; sequence RRVKYRKSQRGSR.

It belongs to the universal ribosomal protein uL16 family. In terms of assembly, part of the 50S ribosomal subunit.

Binds 23S rRNA and is also seen to make contacts with the A and possibly P site tRNAs. The polypeptide is Large ribosomal subunit protein uL16 (Methylacidiphilum infernorum (isolate V4) (Methylokorus infernorum (strain V4))).